The chain runs to 457 residues: MPLSLPLHIVILAAGEGKRMKSALPKVLHPIAGKPMLAHVITTARALTPDVIHVVYGHAGNQVRTAFADQTDLHWVEQTQQLGTGHAVKQTMSAIPNAANVLVLYGDVPLIRAETLQRLPRASTPIAVLVTDLANPAGYGHIVRNSEGKVAAIIEDKDADEEQRRIHTVNTGILCAESTALRRWLSKLSNTNMQGEYYLTDIFASATADLTPANMIMVTDPREVEGVNDLWQLTQLERTWQIRAARALCLQGARVADPARLDQRGTIRIGQNVHIDIDVVLEGEIELGDNVVIGPFVRLKNVKLGPGTKVHAHCDLEGVTTTGSALIGPFARLRPGTMLADGVHIGNFVETKNTSIGADSKANHLTYLGDAQIGTKVNIGAGTITCNYDGVNKSITLIGDGAFIGSHSALIAPVSVGAGATLGAGTVLTHDAPAHQLTVARARQTTLDGWQRPKKKT.

The pyrophosphorylase stretch occupies residues 1-230 (MPLSLPLHIV…PREVEGVNDL (230 aa)). Residues 12-15 (LAAG), Lys26, Gln78, 83-84 (GT), 105-107 (YGD), Gly140, Glu155, Asn170, and Asn228 contribute to the UDP-N-acetyl-alpha-D-glucosamine site. Mg(2+) is bound at residue Asp107. Asn228 is a binding site for Mg(2+). The tract at residues 231–251 (WQLTQLERTWQIRAARALCLQ) is linker. The tract at residues 252–457 (GARVADPARL…DGWQRPKKKT (206 aa)) is N-acetyltransferase. Residues Arg334 and Lys352 each coordinate UDP-N-acetyl-alpha-D-glucosamine. His364 (proton acceptor) is an active-site residue. Tyr367 and Asn378 together coordinate UDP-N-acetyl-alpha-D-glucosamine. Acetyl-CoA is bound by residues Ala381, 387–388 (NY), Ser406, Ala424, and Arg441.

The protein in the N-terminal section; belongs to the N-acetylglucosamine-1-phosphate uridyltransferase family. In the C-terminal section; belongs to the transferase hexapeptide repeat family. In terms of assembly, homotrimer. Requires Mg(2+) as cofactor.

Its subcellular location is the cytoplasm. It carries out the reaction alpha-D-glucosamine 1-phosphate + acetyl-CoA = N-acetyl-alpha-D-glucosamine 1-phosphate + CoA + H(+). The catalysed reaction is N-acetyl-alpha-D-glucosamine 1-phosphate + UTP + H(+) = UDP-N-acetyl-alpha-D-glucosamine + diphosphate. Its pathway is nucleotide-sugar biosynthesis; UDP-N-acetyl-alpha-D-glucosamine biosynthesis; N-acetyl-alpha-D-glucosamine 1-phosphate from alpha-D-glucosamine 6-phosphate (route II): step 2/2. It functions in the pathway nucleotide-sugar biosynthesis; UDP-N-acetyl-alpha-D-glucosamine biosynthesis; UDP-N-acetyl-alpha-D-glucosamine from N-acetyl-alpha-D-glucosamine 1-phosphate: step 1/1. It participates in bacterial outer membrane biogenesis; LPS lipid A biosynthesis. Its function is as follows. Catalyzes the last two sequential reactions in the de novo biosynthetic pathway for UDP-N-acetylglucosamine (UDP-GlcNAc). The C-terminal domain catalyzes the transfer of acetyl group from acetyl coenzyme A to glucosamine-1-phosphate (GlcN-1-P) to produce N-acetylglucosamine-1-phosphate (GlcNAc-1-P), which is converted into UDP-GlcNAc by the transfer of uridine 5-monophosphate (from uridine 5-triphosphate), a reaction catalyzed by the N-terminal domain. This chain is Bifunctional protein GlmU, found in Xylella fastidiosa (strain M12).